The sequence spans 300 residues: tRNA dimethylallyltransferase (300 aa).

G18 to S25 is a binding site for ATP. T20–S25 contributes to the substrate binding site. An interaction with substrate tRNA region spans residues D43 to Q46.

The protein belongs to the IPP transferase family. In terms of assembly, monomer. It depends on Mg(2+) as a cofactor.

The catalysed reaction is adenosine(37) in tRNA + dimethylallyl diphosphate = N(6)-dimethylallyladenosine(37) in tRNA + diphosphate. In terms of biological role, catalyzes the transfer of a dimethylallyl group onto the adenine at position 37 in tRNAs that read codons beginning with uridine, leading to the formation of N6-(dimethylallyl)adenosine (i(6)A). This Cyanothece sp. (strain PCC 7425 / ATCC 29141) protein is tRNA dimethylallyltransferase.